The sequence spans 133 residues: ATP synthase epsilon chain (133 aa).

This sequence belongs to the ATPase epsilon chain family. F-type ATPases have 2 components, CF(1) - the catalytic core - and CF(0) - the membrane proton channel. CF(1) has five subunits: alpha(3), beta(3), gamma(1), delta(1), epsilon(1). CF(0) has three main subunits: a, b and c.

The protein localises to the cell membrane. Functionally, produces ATP from ADP in the presence of a proton gradient across the membrane. The protein is ATP synthase epsilon chain of Clostridium perfringens (strain SM101 / Type A).